The sequence spans 366 residues: uncharacterized protein (366 aa).

The CP-type G domain occupies 59–222; sequence LNILHGIGET…LYDTPGIINN (164 aa).

Belongs to the TRAFAC class YlqF/YawG GTPase family.

In terms of biological role, binds GTP and GDP. This is an uncharacterized protein from Bacillus subtilis (strain 168).